A 380-amino-acid chain; its full sequence is Cytochrome b (380 aa).

A run of 4 helical transmembrane segments spans residues 34-54, 78-99, 114-134, and 179-199; these read FGSL…LLAT, WLIR…YLHI, WNTG…GYVL, and FFAL…IHLT. Heme b is bound by residues H84 and H98. Residues H183 and H197 each contribute to the heme b site. H202 contributes to the a ubiquinone binding site. 4 consecutive transmembrane segments (helical) span residues 227–247, 289–309, 321–341, and 348–368; these read LKDI…ALFS, LGGV…PLLH, FSQF…WVGS, and FIII…LLFP.

It belongs to the cytochrome b family. As to quaternary structure, the cytochrome bc1 complex contains 11 subunits: 3 respiratory subunits (MT-CYB, CYC1 and UQCRFS1), 2 core proteins (UQCRC1 and UQCRC2) and 6 low-molecular weight proteins (UQCRH/QCR6, UQCRB/QCR7, UQCRQ/QCR8, UQCR10/QCR9, UQCR11/QCR10 and a cleavage product of UQCRFS1). This cytochrome bc1 complex then forms a dimer. Requires heme b as cofactor.

The protein localises to the mitochondrion inner membrane. Component of the ubiquinol-cytochrome c reductase complex (complex III or cytochrome b-c1 complex) that is part of the mitochondrial respiratory chain. The b-c1 complex mediates electron transfer from ubiquinol to cytochrome c. Contributes to the generation of a proton gradient across the mitochondrial membrane that is then used for ATP synthesis. The protein is Cytochrome b (MT-CYB) of Alca torda (Razorbill).